We begin with the raw amino-acid sequence, 276 residues long: Large ribosomal subunit protein uL2 (276 aa).

Residues 223 to 276 are disordered; that stretch reads AVMNPVDHPHGGGEGKNSVGRKSPLTPWGKPALGIKTRGRKTSDKFIVRRRNEK. The segment covering 263 to 276 has biased composition (basic and acidic residues); that stretch reads KTSDKFIVRRRNEK.

The protein belongs to the universal ribosomal protein uL2 family. As to quaternary structure, part of the 50S ribosomal subunit. Forms a bridge to the 30S subunit in the 70S ribosome.

One of the primary rRNA binding proteins. Required for association of the 30S and 50S subunits to form the 70S ribosome, for tRNA binding and peptide bond formation. It has been suggested to have peptidyltransferase activity; this is somewhat controversial. Makes several contacts with the 16S rRNA in the 70S ribosome. In Fusobacterium nucleatum subsp. nucleatum (strain ATCC 25586 / DSM 15643 / BCRC 10681 / CIP 101130 / JCM 8532 / KCTC 2640 / LMG 13131 / VPI 4355), this protein is Large ribosomal subunit protein uL2.